The following is a 276-amino-acid chain: Undecaprenyl-diphosphatase (276 aa).

Transmembrane regions (helical) follow at residues 84 to 104, 115 to 135, 188 to 208, 222 to 242, and 250 to 270; these read YRLGWYVIIGTIPICVLGLLF, LWVVATALVVFSGVIALAEYL, FGFLLAIPAVFASGLFSLPDA, QLLVATLIAFVVGLAAVSWFL, and MYWFVGYRVVVGVVVLILLAT.

Belongs to the UppP family.

The protein localises to the cell membrane. It carries out the reaction di-trans,octa-cis-undecaprenyl diphosphate + H2O = di-trans,octa-cis-undecaprenyl phosphate + phosphate + H(+). Its function is as follows. Catalyzes the dephosphorylation of undecaprenyl diphosphate (UPP). Confers resistance to bacitracin. This chain is Undecaprenyl-diphosphatase, found in Mycobacterium ulcerans (strain Agy99).